A 131-amino-acid chain; its full sequence is Fluoride-specific ion channel FluC 1 (131 aa).

A run of 3 helical transmembrane segments spans residues 38-58, 69-89, and 108-128; these read FPLSTLVINGVASLCAGIAMM, TVMMFVVGFLGGFSTFSTALN, and IATVAVPLICVAAGFGIALLA. 2 residues coordinate Na(+): glycine 79 and serine 82.

Belongs to the fluoride channel Fluc/FEX (TC 1.A.43) family.

Its subcellular location is the cell membrane. The catalysed reaction is fluoride(in) = fluoride(out). Its activity is regulated as follows. Na(+) is not transported, but it plays an essential structural role and its presence is essential for fluoride channel function. In terms of biological role, fluoride-specific ion channel. Important for reducing fluoride concentration in the cell, thus reducing its toxicity. This chain is Fluoride-specific ion channel FluC 1, found in Bifidobacterium longum (strain NCC 2705).